The chain runs to 518 residues: Zinc finger protein 776 (518 aa).

A KRAB domain is found at 14 to 89 (VTFEDVAVNF…HWTGVCTKKV (76 aa)). Glycyl lysine isopeptide (Lys-Gly) (interchain with G-Cter in SUMO2) cross-links involve residues K171, K196, K220, and K247. A C2H2-type 1; degenerate zinc finger spans residues 208–230 (YICGESTIPFSNKHSLVLHQRLL). A C2H2-type 2; degenerate zinc finger spans residues 236–258 (YVCSDSGKFTSKSNSFNNHQGVR). C2H2-type zinc fingers lie at residues 264-286 (YQCG…QRVH), 292-314 (YECG…QRVH), 320-342 (YECD…QRVH), 348-370 (YQCG…QRVH), 376-398 (FECT…QRVH), 404-426 (YECK…QRVH), and 432-454 (YECR…QQIH). The C2H2-type 10; degenerate zinc-finger motif lies at 460 to 482 (HECGECGKCFHQKGSLIRHQQIH). The C2H2-type 11 zinc-finger motif lies at 488 to 510 (HECGECGKCFRQKGNLIKHQRVH).

This sequence belongs to the krueppel C2H2-type zinc-finger protein family.

It localises to the nucleus. May be involved in transcriptional regulation. In Homo sapiens (Human), this protein is Zinc finger protein 776 (ZNF776).